We begin with the raw amino-acid sequence, 430 residues long: Adenylosuccinate synthetase (430 aa).

Residues glycine 12–lysine 18 and glycine 40–threonine 42 each bind GTP. The Proton acceptor role is filled by aspartate 13. Mg(2+) is bound by residues aspartate 13 and glycine 40. Residues aspartate 13–lysine 16, asparagine 38–histidine 41, threonine 130, arginine 144, glutamine 224, threonine 239, and arginine 303 each bind IMP. Histidine 41 serves as the catalytic Proton donor. Valine 299–arginine 305 contributes to the substrate binding site. GTP is bound by residues arginine 305, lysine 331–aspartate 333, and serine 413–serine 415.

Belongs to the adenylosuccinate synthetase family. Homodimer. It depends on Mg(2+) as a cofactor.

It is found in the cytoplasm. It catalyses the reaction IMP + L-aspartate + GTP = N(6)-(1,2-dicarboxyethyl)-AMP + GDP + phosphate + 2 H(+). It functions in the pathway purine metabolism; AMP biosynthesis via de novo pathway; AMP from IMP: step 1/2. Plays an important role in the de novo pathway of purine nucleotide biosynthesis. Catalyzes the first committed step in the biosynthesis of AMP from IMP. The chain is Adenylosuccinate synthetase from Methylobacterium nodulans (strain LMG 21967 / CNCM I-2342 / ORS 2060).